The sequence spans 446 residues: Cyclin-F2-2 (446 aa).

The tract at residues 191 to 216 (YNGDNDAPAPDNSTASRPQLCAPYDD) is disordered.

The protein belongs to the cyclin family. Cyclin F subfamily.

This chain is Cyclin-F2-2 (CYCF2-2), found in Oryza sativa subsp. japonica (Rice).